A 1254-amino-acid chain; its full sequence is SUN domain-containing ossification factor (1254 aa).

The N-terminal stretch at 1 to 29 is a signal peptide; the sequence is MKKHRRALALVSCLFLCSLVWLPSWRVCC. Disordered stretches follow at residues 58–88, 118–270, and 282–304; these read KKDE…HKLK, EESS…DIPT, and EKEK…KKVQ. Residues 130–145 are compositionally biased toward low complexity; sequence VENISSSSTSEITPIS. The segment covering 165–175 has biased composition (acidic residues); it reads EQSETDCDVGE. N-linked (GlcNAc...) asparagine glycans are attached at residues N202 and N236. Positions 241 to 253 are enriched in basic and acidic residues; it reads LKNESSDYTKPGD. An SUN domain is found at 284–453; that stretch reads EKSQSMHASS…SLIRVFGTSM (170 aa). The span at 288 to 297 shows a compositional bias: polar residues; it reads SMHASSNGGS. N-linked (GlcNAc...) asparagine glycosylation is present at N524. 3 disordered regions span residues 530 to 553, 583 to 605, and 759 to 788; these read NATA…PSPE, EEEE…EDES, and HIPS…SSIE. Residues 540–553 are compositionally biased toward low complexity; it reads PESTPVSTPVPSPE. Positions 909 to 1009 form a coiled coil; sequence NQKESVFMRL…VAELKREVSD (101 aa). Residues N928 and N955 are each glycosylated (N-linked (GlcNAc...) asparagine). A helical membrane pass occupies residues 1011–1031; that stretch reads QSYLVISLVLCVVLGLMLCMQ. S1081 is subject to Phosphoserine. Residues 1152 to 1172 form a disordered region; it reads EVYHSSYKGPPSEGSSETSSQ. A compositionally biased stretch (low complexity) spans 1163-1172; the sequence is SEGSSETSSQ.

O-glycosylated. O-mannosylated by POMT1 and POMT2 and elongated by POMGNT1. Post-translationally, N-glycosylated. In terms of tissue distribution, highly expressed in pancreas and testis and to a lower extent in prostate, ovary, heart, thymus, small intestine and spleen.

The protein resides in the rough endoplasmic reticulum membrane. Required for bone modeling during late embryogenesis. Regulates type I collagen synthesis in osteoblasts during their postnatal maturation. In Homo sapiens (Human), this protein is SUN domain-containing ossification factor (SUCO).